Reading from the N-terminus, the 419-residue chain is G protein-activated inward rectifier potassium channel 4 (419 aa).

The disordered stretch occupies residues 1–24; the sequence is MAGDSRNAMNQDMEIGVTPRDPKK. Residues 1-86 lie on the Cytoplasmic side of the membrane; sequence MAGDSRNAMN…LFTTLVDLKW (86 aa). At Ser-5 the chain carries Phosphoserine. Residues 87 to 111 traverse the membrane as a helical segment; the sequence is RFNLLVFTMVYTITWLFFGFIWWLI. The Extracellular segment spans residues 112 to 135; sequence AYIRGDLDHVGDREWIPCVENLSG. The segment at residues 136 to 147 is an intramembrane region (helical; Pore-forming); it reads FVSAFLFSIETE. The segment at residues 148-154 is an intramembrane region (pore-forming); that stretch reads TTIGYGF. The short motif at 149–154 is the Selectivity filter element; that stretch reads TIGYGF. Residues 155 to 163 are Extracellular-facing; sequence RVITEKCPE. The chain crosses the membrane as a helical span at residues 164–185; it reads GIVLLLVQAILGSIVNAFMVGC. At 186-419 the chain is on the cytoplasmic side; that stretch reads MFVKISQPKK…SGSQETKDSA (234 aa). Residues 381-419 are disordered; that stretch reads PSPPLPGGCVGAELGAEAEQEGEEEPEGLSGSQETKDSA. Acidic residues predominate over residues 396–407; that stretch reads AEAEQEGEEEPE.

This sequence belongs to the inward rectifier-type potassium channel (TC 1.A.2.1) family. KCNJ5 subfamily. Associates with KCNJ3/GIRK1 or KCNJ6/GIRK2 to form a G-protein-activated heteromultimer pore-forming unit. The resulting inward current is much larger.

Its subcellular location is the membrane. The enzyme catalyses K(+)(in) = K(+)(out). Its activity is regulated as follows. Heteromultimer composed of KCNJ3/GIRK1 and KCNJ5/GIRK4 is activated by phosphatidylinositol 4,5 biphosphate (PtdIns(4,5)P2). Functionally, inward rectifier potassium channels are characterized by a greater tendency to allow potassium to flow into the cell rather than out of it. Their voltage dependence is regulated by the concentration of extracellular potassium; as external potassium is raised, the voltage range of the channel opening shifts to more positive voltages. The inward rectification is mainly due to the blockage of outward current by internal magnesium. This receptor plays a crucial role in regulating the heartbeat. Can be blocked by external barium. This potassium channel is controlled by G proteins. The chain is G protein-activated inward rectifier potassium channel 4 (KCNJ5) from Bos taurus (Bovine).